A 216-amino-acid chain; its full sequence is Transmembrane emp24 domain-containing protein eca (216 aa).

The signal sequence occupies residues 1-20; sequence MRDQFICLALLLCALHSACG. Residues 21–182 are Lumenal-facing; sequence LYFHISETER…FRHTSESTNS (162 aa). One can recognise a GOLD domain in the interval 30–126; it reads RKCFIEEVPD…QLRVHLDIQV (97 aa). The stretch at 134 to 164 forms a coiled coil; the sequence is ANVAQKEKLTELQLRIRQLLDQVEQITKEQN. Residues 183–203 traverse the membrane as a helical segment; it reads RVLWWSLAQTLVLVCMGFWQM. Over 204–216 the chain is Cytoplasmic; sequence RHLKSFFEAKKLV. Positions 213-216 match the Prevents secretion from ER motif; it reads KKLV.

Belongs to the EMP24/GP25L family.

It is found in the endoplasmic reticulum membrane. Its function is as follows. Eca and bai are essential, though not redundant, for dorsoventral patterning of the embryo. Specifically required during early embryogenesis for the activity of maternal tkv, while the zygotic tkv is not affected. Involved in Golgi organization. The protein is Transmembrane emp24 domain-containing protein eca of Drosophila pseudoobscura pseudoobscura (Fruit fly).